The sequence spans 553 residues: Hydroxylamine reductase (553 aa).

[4Fe-4S] cluster-binding residues include C3, C6, C15, and C21. Hybrid [4Fe-2O-2S] cluster-binding residues include H244, E268, C312, C406, C434, C459, E494, and K496. C406 is modified (cysteine persulfide).

It belongs to the HCP family. In terms of assembly, monomer. It depends on [4Fe-4S] cluster as a cofactor. Hybrid [4Fe-2O-2S] cluster is required as a cofactor.

It localises to the cytoplasm. The catalysed reaction is A + NH4(+) + H2O = hydroxylamine + AH2 + H(+). In terms of biological role, catalyzes the reduction of hydroxylamine to form NH(3) and H(2)O. The sequence is that of Hydroxylamine reductase from Nitratidesulfovibrio vulgaris (strain ATCC 29579 / DSM 644 / CCUG 34227 / NCIMB 8303 / VKM B-1760 / Hildenborough) (Desulfovibrio vulgaris).